The sequence spans 126 residues: Glycine cleavage system H protein (126 aa).

In terms of domain architecture, Lipoyl-binding spans 22–104 (VATIGITEYA…YEKAWMVKIE (83 aa)). An N6-lipoyllysine modification is found at lysine 63.

The protein belongs to the GcvH family. The glycine cleavage system is composed of four proteins: P, T, L and H. (R)-lipoate serves as cofactor.

Functionally, the glycine cleavage system catalyzes the degradation of glycine. The H protein shuttles the methylamine group of glycine from the P protein to the T protein. In terms of biological role, is also involved in protein lipoylation via its role as an octanoyl/lipoyl carrier protein intermediate. This Staphylococcus epidermidis (strain ATCC 35984 / DSM 28319 / BCRC 17069 / CCUG 31568 / BM 3577 / RP62A) protein is Glycine cleavage system H protein.